The chain runs to 132 residues: Cytidine deaminase (132 aa).

A CMP/dCMP-type deaminase domain is found at M1–E128. A substrate-binding site is contributed by N42–E44. Zn(2+) is bound at residue C53. E55 acts as the Proton donor in catalysis. Residues C86 and C89 each contribute to the Zn(2+) site.

It belongs to the cytidine and deoxycytidylate deaminase family. The cofactor is Zn(2+).

The catalysed reaction is cytidine + H2O + H(+) = uridine + NH4(+). It carries out the reaction 2'-deoxycytidine + H2O + H(+) = 2'-deoxyuridine + NH4(+). Functionally, this enzyme scavenges exogenous and endogenous cytidine and 2'-deoxycytidine for UMP synthesis. The polypeptide is Cytidine deaminase (cdd) (Halalkalibacterium halodurans (strain ATCC BAA-125 / DSM 18197 / FERM 7344 / JCM 9153 / C-125) (Bacillus halodurans)).